Reading from the N-terminus, the 860-residue chain is Leucine--tRNA ligase (860 aa).

A 'HIGH' region motif is present at residues 42 to 52; that stretch reads PYPSGRLHMGH. Residues 619–623 carry the 'KMSKS' region motif; that stretch reads KMSKS. An ATP-binding site is contributed by Lys-622.

This sequence belongs to the class-I aminoacyl-tRNA synthetase family.

It is found in the cytoplasm. It catalyses the reaction tRNA(Leu) + L-leucine + ATP = L-leucyl-tRNA(Leu) + AMP + diphosphate. The sequence is that of Leucine--tRNA ligase from Salmonella agona (strain SL483).